A 289-amino-acid chain; its full sequence is D-alanine aminotransferase (289 aa).

A substrate-binding site is contributed by Tyr-31. Position 50 (Arg-50) interacts with pyridoxal 5'-phosphate. 2 residues coordinate substrate: Arg-99 and His-101. Lys-147 functions as the Proton acceptor in the catalytic mechanism. At Lys-147 the chain carries N6-(pyridoxal phosphate)lysine. Glu-179 is a pyridoxal 5'-phosphate binding site.

This sequence belongs to the class-IV pyridoxal-phosphate-dependent aminotransferase family. Homodimer. It depends on pyridoxal 5'-phosphate as a cofactor.

The enzyme catalyses D-alanine + 2-oxoglutarate = D-glutamate + pyruvate. Acts on the D-isomers of alanine, leucine, aspartate, glutamate, aminobutyrate, norvaline and asparagine. The enzyme transfers an amino group from a substrate D-amino acid to the pyridoxal phosphate cofactor to form pyridoxamine and an alpha-keto acid in the first half-reaction. The second half-reaction is the reverse of the first, transferring the amino group from the pyridoxamine to a second alpha-keto acid to form the product D-amino acid via a ping-pong mechanism. This is an important process in the formation of D-alanine and D-glutamate, which are essential bacterial cell wall components. The protein is D-alanine aminotransferase (dat) of Listeria monocytogenes serotype 4b (strain F2365).